The chain runs to 311 residues: Putative RNA-binding protein R05D3.8 (311 aa).

In terms of domain architecture, RRM spans 155 to 235; that stretch reads KRLFVSYFPL…RRAVLKESVK (81 aa). Positions 261 to 270 are enriched in polar residues; sequence TPSRPVTSVH. The tract at residues 261-311 is disordered; it reads TPSRPVTSVHASSSASSNHYDPSAAAGYAPLYHQPPESDPLSQCGYGPRKW.

In Caenorhabditis elegans, this protein is Putative RNA-binding protein R05D3.8.